The sequence spans 471 residues: Glutamyl-tRNA(Gln) amidotransferase subunit A, mitochondrial (471 aa).

Active-site charge relay system residues include Lys-64 and Ser-141. Ser-165 functions as the Acyl-ester intermediate in the catalytic mechanism.

Belongs to the amidase family. GatA subfamily. In terms of assembly, subunit of the heterotrimeric GatCAB amidotransferase (AdT) complex, composed of A, B and C subunits.

The protein localises to the mitochondrion. The enzyme catalyses L-glutamyl-tRNA(Gln) + L-glutamine + ATP + H2O = L-glutaminyl-tRNA(Gln) + L-glutamate + ADP + phosphate + H(+). In terms of biological role, allows the formation of correctly charged Gln-tRNA(Gln) through the transamidation of misacylated Glu-tRNA(Gln) in the mitochondria. The reaction takes place in the presence of glutamine and ATP through an activated gamma-phospho-Glu-tRNA(Gln). The protein is Glutamyl-tRNA(Gln) amidotransferase subunit A, mitochondrial of Schizosaccharomyces pombe (strain 972 / ATCC 24843) (Fission yeast).